The primary structure comprises 374 residues: Pectate lyase 3 (374 aa).

Positions 1 to 22 are cleaved as a signal peptide; sequence MKYLLPSAAAGLLLLAAQPTMA. Cys-93 and Cys-176 are oxidised to a cystine. Ca(2+) is bound by residues Asp-150, Asp-152, Glu-187, and Asp-191. Arg-239 is an active-site residue. A disulfide bridge connects residues Cys-350 and Cys-373.

The protein belongs to the polysaccharide lyase 1 family. PLADES subfamily. Requires Ca(2+) as cofactor.

It is found in the secreted. The catalysed reaction is Eliminative cleavage of (1-&gt;4)-alpha-D-galacturonan to give oligosaccharides with 4-deoxy-alpha-D-galact-4-enuronosyl groups at their non-reducing ends.. It participates in glycan metabolism; pectin degradation; 2-dehydro-3-deoxy-D-gluconate from pectin: step 2/5. Functionally, involved in maceration and soft-rotting of plant tissue. This chain is Pectate lyase 3 (pel3), found in Pectobacterium carotovorum subsp. carotovorum (Erwinia carotovora subsp. carotovora).